The chain runs to 458 residues: UDP-N-acetylmuramate--L-alanine ligase (458 aa).

Position 119-125 (119-125 (GTHGKTT)) interacts with ATP.

It belongs to the MurCDEF family.

The protein resides in the cytoplasm. It carries out the reaction UDP-N-acetyl-alpha-D-muramate + L-alanine + ATP = UDP-N-acetyl-alpha-D-muramoyl-L-alanine + ADP + phosphate + H(+). Its pathway is cell wall biogenesis; peptidoglycan biosynthesis. Its function is as follows. Cell wall formation. In Phocaeicola vulgatus (strain ATCC 8482 / DSM 1447 / JCM 5826 / CCUG 4940 / NBRC 14291 / NCTC 11154) (Bacteroides vulgatus), this protein is UDP-N-acetylmuramate--L-alanine ligase.